Consider the following 457-residue polypeptide: NADH-quinone oxidoreductase subunit D (457 aa).

A disordered region spans residues 1-23 (MSTHTETPVDGSAETITGAQPYE).

It belongs to the complex I 49 kDa subunit family. NDH-1 is composed of 14 different subunits. Subunits NuoB, C, D, E, F, and G constitute the peripheral sector of the complex.

Its subcellular location is the cell membrane. The catalysed reaction is a quinone + NADH + 5 H(+)(in) = a quinol + NAD(+) + 4 H(+)(out). In terms of biological role, NDH-1 shuttles electrons from NADH, via FMN and iron-sulfur (Fe-S) centers, to quinones in the respiratory chain. The immediate electron acceptor for the enzyme in this species is believed to be a menaquinone. Couples the redox reaction to proton translocation (for every two electrons transferred, four hydrogen ions are translocated across the cytoplasmic membrane), and thus conserves the redox energy in a proton gradient. The polypeptide is NADH-quinone oxidoreductase subunit D (Parafrankia sp. (strain EAN1pec)).